Consider the following 533-residue polypeptide: NEDD8-activating enzyme E1 regulatory subunit (533 aa).

An interaction with uba3 region spans residues 330–343 (DMIADSDKFIKLQN).

Belongs to the ubiquitin-activating E1 family. ULA1 subfamily. In terms of assembly, heterodimer of uba3 and nae1. The complex binds nedd8 and ube2m.

It participates in protein modification; protein neddylation. Regulatory subunit of the dimeric uba3-nae1 E1 enzyme. E1 activates nedd8 by first adenylating its C-terminal glycine residue with ATP, thereafter linking this residue to the side chain of the catalytic cysteine, yielding a nedd8-uba3 thioester and free AMP. E1 finally transfers nedd8 to the catalytic cysteine of ube2m. The covalent attachment of nedd8 to target proteins is known as 'neddylation' and the process is involved in the regulation of cell growth, viability and development. The sequence is that of NEDD8-activating enzyme E1 regulatory subunit (nae1) from Xenopus laevis (African clawed frog).